A 999-amino-acid polypeptide reads, in one-letter code: P3N-PIPO polyprotein (999 aa).

A Peptidase S30 domain is found at 176 to 317 (LKKAVGSGKV…LDNVYTIEHY (142 aa)). Catalysis depends on for P1 proteinase activity residues His230, Glu239, and Ser271. The Involved in interaction with stylet and aphid transmission motif lies at 370 to 373 (KLSC). Positions 626 to 628 (PTK) match the Involved in virions binding and aphid transmission motif. Positions 652–774 (MYIAKEGYCY…EGEMKHYRVG (123 aa)) constitute a Peptidase C6 domain. Residues Cys660 and His733 each act as for helper component proteinase activity in the active site.

This sequence belongs to the potyviridae P3N-PIPO polyprotein family. As to quaternary structure, interacts (via PIPO domain) with host PCaP1 protein; this interaction may help to anchor the movement complex to the plasma membrane from which the complex could move to the plasmodesmata. Potyviral RNA is expressed as two polyproteins which undergo post-translational proteolytic processing. Genome polyprotein is processed by NIa-pro, P1 and HC-pro proteinases resulting in the production of at least ten individual proteins. P3N-PIPO is cleaved by P1 and HC-pro proteinases resulting in the production of three individual proteins. The P1 proteinase and the HC-pro cleave only their respective C-termini autocatalytically.

Its subcellular location is the host cell junction. The protein localises to the host plasmodesma. The catalysed reaction is Hydrolyzes a Gly-|-Gly bond at its own C-terminus, commonly in the sequence -Tyr-Xaa-Val-Gly-|-Gly, in the processing of the potyviral polyprotein.. Functionally, required for aphid transmission and also has proteolytic activity. Only cleaves a Gly-Gly dipeptide at its own C-terminus. Interacts with virions and aphid stylets. Acts as a suppressor of RNA-mediated gene silencing, also known as post-transcriptional gene silencing (PTGS), a mechanism of plant viral defense that limits the accumulation of viral RNAs. May have RNA-binding activity. In terms of biological role, allows efficient cell to cell propagation, by bypassing the host cell wall barrier. Transports viral genome to neighboring plant cells directly through plasmosdesmata, without any budding. This Phaseolus vulgaris (Kidney bean) protein is P3N-PIPO polyprotein.